The sequence spans 764 residues: Palmitoyltransferase AKR1 (764 aa).

Disordered stretches follow at residues 1–38 (MVNELENVPRASTLTNEEQTVDPSNNDSQEDISLGDSN) and 51–71 (SGNEEESGNEQVNHNDEAEED). At 1–321 (MVNELENVPR…IKKWFKKSQH (321 aa)) the chain is on the cytoplasmic side. Over residues 10 to 27 (RASTLTNEEQTVDPSNND) the composition is skewed to polar residues. 2 positions are modified to phosphoserine: serine 51 and serine 57. ANK repeat units follow at residues 72 to 102 (PLLTRYHTACQRGDLATVKEMIHGKLLEVNN), 108 to 137 (EHITGLHWASINNRLSVVDFLVSQGADVNA), 142 to 171 (LHATPLHWAARYGYVYIVDFLLKHGADPTM), 175 to 204 (QGFNLLHLSVNSSNIMLVLYVLFNVVSKGL), 213 to 242 (KGRTSLLWAAYQGDSLTVAELLKFGASIKI), and 246 to 275 (EGFTPLHWGTVKGQPHVLKYLIQDGADFFQ). Residues 322–341 (AKLVTFITPFLFLGIAFALF) traverse the membrane as a helical segment. Over 342–346 (SHINP) the chain is Lumenal. A helical transmembrane segment spans residues 347 to 364 (LFVIIVLFLLAIATNKGL). The Cytoplasmic segment spans residues 365 to 384 (NKFVLPSYGRMGVHNVTLLR). The helical transmembrane segment at 385 to 405 (SPLLSGVFFGTLLWVTIVWFF) threads the bilayer. The Lumenal portion of the chain corresponds to 406 to 418 (KVMPRTFSDEQYT). Residues 419-439 (NILMLVILVSVFYLFGQLVIM) traverse the membrane as a helical segment. At 440 to 513 (DPGCLPEETD…FNDVGLKNHK (74 aa)) the chain is on the cytoplasmic side. The DHHC domain occupies 470–520 (NFCIETWIRKPLRSKFSPLNNAVVARFDHYCPWIFNDVGLKNHKAFIFFIT). Catalysis depends on cysteine 500, which acts as the S-palmitoyl cysteine intermediate. Residues 514-534 (AFIFFITLMESGIFTFLALCL) traverse the membrane as a helical segment. Over 535–570 (EYFDELEDAHEDTSQKNGKCFILGASDLCSGLIYDR) the chain is Lumenal. Residues 571-591 (FVFLILLWALLQSIWVASLIF) traverse the membrane as a helical segment. Topologically, residues 592 to 764 (VQAFQICKGM…KDVEQGNDMV (173 aa)) are cytoplasmic.

The protein belongs to the DHHC palmitoyltransferase family. AKR/ZDHHC17 subfamily.

Its subcellular location is the early endosome membrane. The protein localises to the golgi apparatus membrane. The enzyme catalyses L-cysteinyl-[protein] + hexadecanoyl-CoA = S-hexadecanoyl-L-cysteinyl-[protein] + CoA. Functionally, palmitoyltransferase specific for casein kinase 1. Palmitoylates isoforms YCK1 and YCK2 at both C-terminal cysteine residues, which is required for their proper plasma membrane localization. Required for constitutive endocytosis of a-factor receptor STE3 and both constitutive and pheromone-induced endocytosis of alpha-factor receptor STE2. This Saccharomyces cerevisiae (strain ATCC 204508 / S288c) (Baker's yeast) protein is Palmitoyltransferase AKR1 (AKR1).